The chain runs to 411 residues: MADVVVGIQWGDEGKGKIVDRIAKDYDFVVRYQGGHNAGHTIVHKGVKHSLHLMPSGVLYPQCKNIISSAVVVSIKDLCEEISAFEDLENRLFISDRAHVILPYHAKKDAFKEKSQNIGTTKKGIGPCYEDKMARSGIRMGDLLDDKILEERLNAHFKAIEPFKEAYDLGENYEKDLREYFKTHAPKICPFIKDTTSMLIEANQKGEKILLEGAQGTLLDIDLGTYPFVTSSNTTSASACVSTGLNPKAINEVIGITKAYSTRVGNGPFPSEDTTPMGDHLRTKGAEFGTTTKRPRRCGWLDLVALKYACTLNGCTQLALMKLDVLDGIDAIKVCVAYERKGERLEAFPSDLKDCAPIYQTFKGWEKSAGVRKLDDLEPNAREYIRFIEKEVGVKIRLISTSPEREDTIFL.

Residues 11–17 (GDEGKGK) and 39–41 (GHT) contribute to the GTP site. The active-site Proton acceptor is aspartate 12. Mg(2+) is bound by residues aspartate 12 and glycine 39. IMP-binding positions include 12–15 (DEGK), 37–40 (NAGH), threonine 121, arginine 135, glutamine 215, threonine 230, and arginine 294. Histidine 40 acts as the Proton donor in catalysis. Residue 290–296 (TTTKRPR) coordinates substrate. GTP-binding positions include arginine 296, 322-324 (KLD), and 400-402 (STS).

It belongs to the adenylosuccinate synthetase family. As to quaternary structure, homodimer. Mg(2+) is required as a cofactor.

It localises to the cytoplasm. It carries out the reaction IMP + L-aspartate + GTP = N(6)-(1,2-dicarboxyethyl)-AMP + GDP + phosphate + 2 H(+). Its pathway is purine metabolism; AMP biosynthesis via de novo pathway; AMP from IMP: step 1/2. Functionally, plays an important role in the de novo pathway of purine nucleotide biosynthesis. Catalyzes the first committed step in the biosynthesis of AMP from IMP. This chain is Adenylosuccinate synthetase, found in Helicobacter pylori (strain Shi470).